The following is a 277-amino-acid chain: Diaminopimelate epimerase (277 aa).

Residues N13, Q46, and N66 each contribute to the substrate site. Residue C75 is the Proton donor of the active site. Substrate is bound by residues 76-77, N160, N193, and 211-212; these read GN and ER. C220 serves as the catalytic Proton acceptor. 221–222 serves as a coordination point for substrate; that stretch reads GS.

It belongs to the diaminopimelate epimerase family. As to quaternary structure, homodimer.

The protein resides in the cytoplasm. It catalyses the reaction (2S,6S)-2,6-diaminopimelate = meso-2,6-diaminopimelate. Its pathway is amino-acid biosynthesis; L-lysine biosynthesis via DAP pathway; DL-2,6-diaminopimelate from LL-2,6-diaminopimelate: step 1/1. In terms of biological role, catalyzes the stereoinversion of LL-2,6-diaminopimelate (L,L-DAP) to meso-diaminopimelate (meso-DAP), a precursor of L-lysine and an essential component of the bacterial peptidoglycan. The polypeptide is Diaminopimelate epimerase (Legionella pneumophila (strain Corby)).